The sequence spans 326 residues: Probable cell division protein WhiA (326 aa).

The H-T-H motif DNA-binding region spans 275–308 (SLEELGQLAEPPMTKDAVAGRIRRLLAMADKRAR).

It belongs to the WhiA family.

Functionally, involved in cell division and chromosome segregation. The sequence is that of Probable cell division protein WhiA from Saccharopolyspora erythraea (strain ATCC 11635 / DSM 40517 / JCM 4748 / NBRC 13426 / NCIMB 8594 / NRRL 2338).